A 261-amino-acid chain; its full sequence is tRNA pseudouridine synthase A (261 aa).

Asp-51 serves as the catalytic Nucleophile. Tyr-109 is a substrate binding site.

The protein belongs to the tRNA pseudouridine synthase TruA family. In terms of assembly, homodimer.

The enzyme catalyses uridine(38/39/40) in tRNA = pseudouridine(38/39/40) in tRNA. Functionally, formation of pseudouridine at positions 38, 39 and 40 in the anticodon stem and loop of transfer RNAs. The chain is tRNA pseudouridine synthase A from Shewanella denitrificans (strain OS217 / ATCC BAA-1090 / DSM 15013).